A 719-amino-acid polypeptide reads, in one-letter code: Solute carrier organic anion transporter family member 6A1 (719 aa).

Residues Met1–Lys46 form a disordered region. The Cytoplasmic segment spans residues Met1–Arg106. The segment covering Arg33 to Lys46 has biased composition (basic residues). The helical transmembrane segment at Cys107–Ile126 threads the bilayer. At Asp127 to Leu145 the chain is on the extracellular side. A helical membrane pass occupies residues Ala146 to Gly166. The Cytoplasmic segment spans residues Asp167 to Val171. The chain crosses the membrane as a helical span at residues Ile172–Glu196. Over Asn197 to Ser223 the chain is Extracellular. A helical transmembrane segment spans residues Phe224 to Ile254. Over Asp255–Ser274 the chain is Cytoplasmic. A helical transmembrane segment spans residues Met275–Thr295. Over Thr296–Leu311 the chain is Extracellular. Asn300 carries an N-linked (GlcNAc...) asparagine glycan. A helical transmembrane segment spans residues Trp312–Pro336. The Cytoplasmic portion of the chain corresponds to Asn337 to Ile378. The chain crosses the membrane as a helical span at residues Leu379 to Ile400. Topologically, residues Gly401–Val420 are extracellular. The helical transmembrane segment at Ala421 to Val444 threads the bilayer. Residues Ser445 to Glu448 are Cytoplasmic-facing. A helical transmembrane segment spans residues Met449–Ile472. The Extracellular portion of the chain corresponds to Ile473–Phe581. The 56-residue stretch at Gly496–Lys551 folds into the Kazal-like domain. N-linked (GlcNAc...) asparagine glycosylation occurs at Asn497. 3 disulfide bridges follow: Cys502/Cys532, Cys508/Cys528, and Cys517/Cys549. A glycan (N-linked (GlcNAc...) asparagine) is linked at Asn546. Residues Ile582–Thr604 form a helical membrane-spanning segment. Residues Arg605–Ser613 lie on the Cytoplasmic side of the membrane. The helical transmembrane segment at Leu614–Gly639 threads the bilayer. The Extracellular portion of the chain corresponds to Glu640–Cys673. Residue Asn661 is glycosylated (N-linked (GlcNAc...) asparagine). Residues Phe674–Tyr691 traverse the membrane as a helical segment. The Cytoplasmic segment spans residues Lys692–Leu719.

It belongs to the organo anion transporter (TC 2.A.60) family. In terms of tissue distribution, strongly expressed in testis. Weakly expressed in spleen, brain, fetal brain and placenta. Detected in lung tumors.

Its subcellular location is the cell membrane. In Homo sapiens (Human), this protein is Solute carrier organic anion transporter family member 6A1 (SLCO6A1).